The following is a 362-amino-acid chain: Histidinol-phosphate aminotransferase (362 aa).

N6-(pyridoxal phosphate)lysine is present on Lys-210.

It belongs to the class-II pyridoxal-phosphate-dependent aminotransferase family. Histidinol-phosphate aminotransferase subfamily. As to quaternary structure, homodimer. Pyridoxal 5'-phosphate is required as a cofactor.

It carries out the reaction L-histidinol phosphate + 2-oxoglutarate = 3-(imidazol-4-yl)-2-oxopropyl phosphate + L-glutamate. The protein operates within amino-acid biosynthesis; L-histidine biosynthesis; L-histidine from 5-phospho-alpha-D-ribose 1-diphosphate: step 7/9. The polypeptide is Histidinol-phosphate aminotransferase (Rhodopirellula baltica (strain DSM 10527 / NCIMB 13988 / SH1)).